Consider the following 300-residue polypeptide: MARNSLPTITAGEAGLNRYLDEIRKFPMLEPQEEYMLGKRYAEHGDRDAAHKLVTSHLRLVAKIAMGYRGYGLPIGEVVSEGNVGLMQAVKKFDPERGFRLATYAMWWIKASIQEYILRSWSLVKMGTTANQKRLFFNLRRLKGRIQAIDDGDLKPEHVKEIATKLQVSEEEVISMNRRLHGDASLNAPIKASEGESGQWQDWLVDDHESQEAVLIEQDELETRRRMLAKAMGVLNDRERRIFEARRLAEDPVTLEELSSEFDISRERVRQIEVRAFEKVQEAVQKEALEAARALRVVDA.

Positions 53–122 (LVTSHLRLVA…IQEYILRSWS (70 aa)) are sigma-70 factor domain-2. Positions 77 to 80 (EVVS) match the Interaction with polymerase core subunit RpoC motif. A sigma-70 factor domain-4 region spans residues 231–282 (AMGVLNDRERRIFEARRLAEDPVTLEELSSEFDISRERVRQIEVRAFEKVQE). Residues 255–274 (LEELSSEFDISRERVRQIEV) constitute a DNA-binding region (H-T-H motif).

The protein belongs to the sigma-70 factor family. RpoH subfamily. Interacts with the RNA polymerase core enzyme.

The protein localises to the cytoplasm. In terms of biological role, sigma factors are initiation factors that promote the attachment of RNA polymerase to specific initiation sites and are then released. This sigma factor is involved in regulation of expression of heat shock genes. In Rhizobium radiobacter (Agrobacterium tumefaciens), this protein is RNA polymerase sigma factor RpoH.